Reading from the N-terminus, the 347-residue chain is Haptoglobin (347 aa).

Residues 1-18 form the signal peptide; the sequence is MRALGAVVTLLLWGQLFA. Residues 31-88 form the Sushi domain; it reads DSCPKPPEIANGYVEHLVRYRCRQFYRLRAEGDGVYTLNDEKQWMNTVAGEKLPECEA. Cystine bridges form between Cys52–Cys86, Cys90–Cys207, Cys250–Cys281, and Cys292–Cys322. The Peptidase S1 domain occupies 103 to 345; the sequence is IIGGSMDAKG…LKDWVQETMA (243 aa). Asn148, Asn182, and Asn264 each carry an N-linked (GlcNAc...) asparagine glycan. The segment at 259–264 is interaction with CD163; the sequence is VPEKKN.

It belongs to the peptidase S1 family. Tetramer of two alpha and two beta chains; disulfide-linked. The hemoglobin/haptoglobin complex is composed of a haptoglobin dimer bound to two hemoglobin alpha-beta dimers. Interacts with CD163. Interacts with ERGIC3. As to expression, expressed by the liver and secreted in plasma.

The protein resides in the secreted. As a result of hemolysis, hemoglobin is found to accumulate in the kidney and is secreted in the urine. Haptoglobin captures, and combines with free plasma hemoglobin to allow hepatic recycling of heme iron and to prevent kidney damage. Haptoglobin also acts as an antioxidant, has antibacterial activity and plays a role in modulating many aspects of the acute phase response. Hemoglobin/haptoglobin complexes are rapidly cleared by the macrophage CD163 scavenger receptor expressed on the surface of liver Kupfer cells through an endocytic lysosomal degradation pathway. This chain is Haptoglobin (Hp), found in Mus caroli (Ryukyu mouse).